A 944-amino-acid chain; its full sequence is Leucine--tRNA ligase (944 aa).

The short motif at 40–51 is the 'HIGH' region element; the sequence is PYPSGAGLHVGH. The 'KMSKS' region signature appears at 718–722; it reads KMSKS. Lys-721 is an ATP binding site.

Belongs to the class-I aminoacyl-tRNA synthetase family.

It is found in the cytoplasm. It carries out the reaction tRNA(Leu) + L-leucine + ATP = L-leucyl-tRNA(Leu) + AMP + diphosphate. The sequence is that of Leucine--tRNA ligase from Bacteroides thetaiotaomicron (strain ATCC 29148 / DSM 2079 / JCM 5827 / CCUG 10774 / NCTC 10582 / VPI-5482 / E50).